The sequence spans 212 residues: Probable nicotinate-nucleotide adenylyltransferase (212 aa).

The protein belongs to the NadD family.

It catalyses the reaction nicotinate beta-D-ribonucleotide + ATP + H(+) = deamido-NAD(+) + diphosphate. The protein operates within cofactor biosynthesis; NAD(+) biosynthesis; deamido-NAD(+) from nicotinate D-ribonucleotide: step 1/1. In terms of biological role, catalyzes the reversible adenylation of nicotinate mononucleotide (NaMN) to nicotinic acid adenine dinucleotide (NaAD). The polypeptide is Probable nicotinate-nucleotide adenylyltransferase (Chromobacterium violaceum (strain ATCC 12472 / DSM 30191 / JCM 1249 / CCUG 213 / NBRC 12614 / NCIMB 9131 / NCTC 9757 / MK)).